Consider the following 281-residue polypeptide: Bifunctional protein FolD (281 aa).

Residues 165–167 (GRS) and S190 contribute to the NADP(+) site.

It belongs to the tetrahydrofolate dehydrogenase/cyclohydrolase family. As to quaternary structure, homodimer.

It carries out the reaction (6R)-5,10-methylene-5,6,7,8-tetrahydrofolate + NADP(+) = (6R)-5,10-methenyltetrahydrofolate + NADPH. It catalyses the reaction (6R)-5,10-methenyltetrahydrofolate + H2O = (6R)-10-formyltetrahydrofolate + H(+). Its pathway is one-carbon metabolism; tetrahydrofolate interconversion. Functionally, catalyzes the oxidation of 5,10-methylenetetrahydrofolate to 5,10-methenyltetrahydrofolate and then the hydrolysis of 5,10-methenyltetrahydrofolate to 10-formyltetrahydrofolate. This is Bifunctional protein FolD from Polaromonas sp. (strain JS666 / ATCC BAA-500).